Reading from the N-terminus, the 72-residue chain is SPbeta prophage-derived uncharacterized protein YoqN (72 aa).

In Bacillus subtilis (strain 168), this protein is SPbeta prophage-derived uncharacterized protein YoqN (yoqN).